Consider the following 122-residue polypeptide: Large ribosomal subunit protein uL14 (122 aa).

It belongs to the universal ribosomal protein uL14 family. Part of the 50S ribosomal subunit. Forms a cluster with proteins L3 and L19. In the 70S ribosome, L14 and L19 interact and together make contacts with the 16S rRNA in bridges B5 and B8.

In terms of biological role, binds to 23S rRNA. Forms part of two intersubunit bridges in the 70S ribosome. The chain is Large ribosomal subunit protein uL14 from Paracidovorax citrulli (strain AAC00-1) (Acidovorax citrulli).